The chain runs to 580 residues: Glutathione hydrolase proenzyme (580 aa).

An N-terminal signal peptide occupies residues 1 to 25; it reads MIKPTFLRRVAIAALLSGSCFSAAA. Arg-114 contacts L-glutamate. The Nucleophile role is filled by Thr-391. L-glutamate-binding positions include Thr-409, Asn-411, Gln-430, Asp-433, 462 to 463, and 483 to 484; these read SS and GG. Positions 561 to 580 are disordered; it reads DGELYGASDPRSVDDLTAGY.

This sequence belongs to the gamma-glutamyltransferase family. As to quaternary structure, this enzyme consists of two polypeptide chains, which are synthesized in precursor form from a single polypeptide. Cleaved by autocatalysis into a large and a small subunit.

Its subcellular location is the periplasm. It catalyses the reaction an N-terminal (5-L-glutamyl)-[peptide] + an alpha-amino acid = 5-L-glutamyl amino acid + an N-terminal L-alpha-aminoacyl-[peptide]. The enzyme catalyses glutathione + H2O = L-cysteinylglycine + L-glutamate. It carries out the reaction an S-substituted glutathione + H2O = an S-substituted L-cysteinylglycine + L-glutamate. Its pathway is sulfur metabolism; glutathione metabolism. Its activity is regulated as follows. Transferase and hydrolase activities are inhibited by L-Ala and L-Gln, and also by GGT affinity labeling reagents such as azaserine and 6-diazo-5-oxo-nor-leucine. In terms of biological role, cleaves the gamma-glutamyl bond of periplasmic glutathione (gamma-Glu-Cys-Gly), glutathione conjugates, and other gamma-glutamyl compounds. The metabolism of glutathione releases free glutamate and the dipeptide cysteinyl-glycine, which is hydrolyzed to cysteine and glycine by dipeptidases; it may function in amino acid uptake/salvage, or possibly in peptidoglycan linkage. Catalyzes the hydrolysis and transpeptidation of many gamma-glutamyl compounds (including some D-gamma-glutamyl substrates), with a preference for basic and aromatic amino acids as acceptors. The KM values for gamma-glutamyl acceptors are so high that it has been proposed transpeptidation is not the physiological role in E.coli. The chain is Glutathione hydrolase proenzyme (ggt) from Escherichia coli (strain K12).